We begin with the raw amino-acid sequence, 235 residues long: Orotidine 5'-phosphate decarboxylase (235 aa).

Substrate-binding positions include aspartate 16, lysine 38, 65–74, threonine 120, arginine 181, glutamine 190, glycine 210, and arginine 211; that span reads DLKLHDIGNT. Lysine 67 serves as the catalytic Proton donor.

The protein belongs to the OMP decarboxylase family. Type 1 subfamily. Homodimer.

It catalyses the reaction orotidine 5'-phosphate + H(+) = UMP + CO2. The protein operates within pyrimidine metabolism; UMP biosynthesis via de novo pathway; UMP from orotate: step 2/2. Functionally, catalyzes the decarboxylation of orotidine 5'-monophosphate (OMP) to uridine 5'-monophosphate (UMP). This Rhodopseudomonas palustris (strain BisA53) protein is Orotidine 5'-phosphate decarboxylase.